The chain runs to 191 residues: Accessory gene regulator protein B (191 aa).

5 consecutive transmembrane segments (helical) span residues 45-65, 81-101, 108-128, 144-164, and 165-185; these read IVVY…TVHL, STFA…WILI, IFMI…SPAI, ITAI…KQPF, and NELV…IFFP.

Belongs to the AgrB family.

The protein localises to the cell membrane. Functionally, essential for the production of a quorum sensing system signal molecule, the autoinducing peptide (AIP). This quorum sensing system is responsible for the regulation of the expression of virulence factor genes. Involved in the proteolytic processing of AgrD, the precursor of AIP. This Staphylococcus carnosus (strain TM300) protein is Accessory gene regulator protein B.